The chain runs to 210 residues: Large ribosomal subunit protein uL4 (210 aa).

The disordered stretch occupies residues 46–85; it reads QGTASTLTRSEVRGGGRKPYKQKGTGRARQGSIRTPLRPG. Basic residues predominate over residues 60–71; the sequence is GGRKPYKQKGTG.

It belongs to the universal ribosomal protein uL4 family. Part of the 50S ribosomal subunit.

Functionally, one of the primary rRNA binding proteins, this protein initially binds near the 5'-end of the 23S rRNA. It is important during the early stages of 50S assembly. It makes multiple contacts with different domains of the 23S rRNA in the assembled 50S subunit and ribosome. Its function is as follows. Forms part of the polypeptide exit tunnel. This Prochlorococcus marinus (strain AS9601) protein is Large ribosomal subunit protein uL4.